The sequence spans 275 residues: 2,3,4,5-tetrahydropyridine-2,6-dicarboxylate N-succinyltransferase (275 aa).

2 residues coordinate substrate: R106 and D143.

It belongs to the transferase hexapeptide repeat family. In terms of assembly, homotrimer.

Its subcellular location is the cytoplasm. It catalyses the reaction (S)-2,3,4,5-tetrahydrodipicolinate + succinyl-CoA + H2O = (S)-2-succinylamino-6-oxoheptanedioate + CoA. Its pathway is amino-acid biosynthesis; L-lysine biosynthesis via DAP pathway; LL-2,6-diaminopimelate from (S)-tetrahydrodipicolinate (succinylase route): step 1/3. The sequence is that of 2,3,4,5-tetrahydropyridine-2,6-dicarboxylate N-succinyltransferase from Burkholderia pseudomallei (strain 1106a).